Consider the following 158-residue polypeptide: Small ribosomal subunit protein uS7 (158 aa).

This sequence belongs to the universal ribosomal protein uS7 family. In terms of assembly, part of the 30S ribosomal subunit. Contacts proteins S9 and S11.

Its function is as follows. One of the primary rRNA binding proteins, it binds directly to 16S rRNA where it nucleates assembly of the head domain of the 30S subunit. Is located at the subunit interface close to the decoding center, probably blocks exit of the E-site tRNA. In Leptospira biflexa, this protein is Small ribosomal subunit protein uS7.